Reading from the N-terminus, the 192-residue chain is Adenylate kinase (192 aa).

12–17 (GSGKTT) provides a ligand contact to ATP. Positions 34–63 (STGDLLRAEVASGSELGKTIDSFISKGNLV) are NMP. AMP is bound by residues Thr-35, Arg-40, 61-63 (NLV), 88-91 (GYPR), and Gln-95. Residues 130 to 136 (GRNRGAD) form an LID region. Arg-131 serves as a coordination point for ATP. AMP-binding residues include Arg-133 and Arg-145. ATP is bound at residue Arg-173.

Belongs to the adenylate kinase family. Monomer.

It localises to the cytoplasm. The catalysed reaction is AMP + ATP = 2 ADP. The protein operates within purine metabolism; AMP biosynthesis via salvage pathway; AMP from ADP: step 1/1. Catalyzes the reversible transfer of the terminal phosphate group between ATP and AMP. Plays an important role in cellular energy homeostasis and in adenine nucleotide metabolism. The polypeptide is Adenylate kinase (Campylobacter jejuni subsp. jejuni serotype O:2 (strain ATCC 700819 / NCTC 11168)).